The primary structure comprises 1253 residues: MTTHVTLEDALSNVDLLEELPLPDQQPCIEPPPSSIMYQANFDTNFEDRNAFVTGIARYIEQATVHSSMNEMLEEGQEYAVMLYTWRSCSRAIPQVKCNEQPNRVEIYEKTVEVLEPEVTKLMKFMYFQRKAIERFCNEVKRLCHTERRKDFVSEAYLLTLGKFINMFAVLDELKNMKCSVKNDHSAYKRAAQFLRKMADPQSIQESQNLSMFLANHNRITQCLHQQLEVIPGYEELLADIVNICVDYYENKMYLTPSEKHMLLKVMGFGLYLMDGNVSNIYKLDAKKRINLSKIDKFFKQLQVVPLFGDMQIELARYIETSAHYEENKSKWTCTQSSISPQYNICEQMVQIRDDHIRFISELARYSNSEVVTGSGLDSQKSDEEYRELFDLALRGLQLLSKWSAHVMEVYSWKLVHPTDKFCNKDCPGTAEEYERATRYNYTSEEKFAFVEVIAMVKGLQVLMGRMESVFNQAIRNTIYAALQDFAQSSLREPLRQAVRKKKNVLISVLQAIRKTVCDWEAGREPPNDPCLRGEKDPKGGFDINVPRRAVGPSSTQLYMVRTMLESLIADKSGSKKTLRSSLDGPIVQAIEEFHKQSFFFTHLLNFSEALQQCCDLSQLWFREFFLELTMGRRIQFPIEMSMPWILTDHILETKEPSMMEYVLYPLDLYNDSAYYALTKFKKQFLYDEIEAEVNLCFDQFVYKLSDQIFAYYKAMSGSVLLDKRFRAECKNYGVIIPYPPSNRYETLLKQRHVQLLGRSIDLNRLITQRISAAMYKSLDQAISRFESEDLTSIVELEWLLDINRLTHRLLSKHLTLDSFDAMFREANHNVSAPYGRNTLHVFWELNFDFLPNYCYNGSTNRFVRTAIPFTQEPQRDKPANVQPYYLYGSKPLNIAYSHIYSSYRNFVGPPHFKTICRLLGYQGIAVVMEELLKIVKSLLQGTVLQYVKTLIEVMPKICRLPRHEYGSPGILEFFHHQLKDIIEYAELKTDVFQSLREVGNAILFCLLIEQALSQEEVCDLLHAAPFQNILPRVYIKEGERLEVRMKRLEAKYAPLHLVPLIERLGTPQQIAIAREGDLLTKERLCCGLSMFEVILTRIRSYLQDPIWRGPPPTNGVMHVDECVELHRLWSAMQFVYCIPVGTNEFTAEQCFGDGLNWAGCAIIVLLGQQRRFDLFDFCYHLLKVQRQDGKDEIIKNVPLKKMADRIRKYQILNNEIFAVLNKYMKSVESDSSTVEHVRCFQPPIHQSLATTC.

It belongs to the CYFIP family.

It localises to the cytoplasm. In terms of biological role, involved in T-cell adhesion and p53-dependent induction of apoptosis. Does not bind RNA. This is Cytoplasmic FMR1-interacting protein 2 (cyfip2) from Xenopus laevis (African clawed frog).